Consider the following 228-residue polypeptide: Phosphoribosylformylglycinamidine synthase subunit PurQ (228 aa).

In terms of domain architecture, Glutamine amidotransferase type-1 spans 3–225; that stretch reads FAVLVFPGSN…LTTLKSGVVT (223 aa). C86 serves as the catalytic Nucleophile. Residues H194 and E196 contribute to the active site.

As to quaternary structure, part of the FGAM synthase complex composed of 1 PurL, 1 PurQ and 2 PurS subunits.

The protein localises to the cytoplasm. It carries out the reaction N(2)-formyl-N(1)-(5-phospho-beta-D-ribosyl)glycinamide + L-glutamine + ATP + H2O = 2-formamido-N(1)-(5-O-phospho-beta-D-ribosyl)acetamidine + L-glutamate + ADP + phosphate + H(+). The enzyme catalyses L-glutamine + H2O = L-glutamate + NH4(+). The protein operates within purine metabolism; IMP biosynthesis via de novo pathway; 5-amino-1-(5-phospho-D-ribosyl)imidazole from N(2)-formyl-N(1)-(5-phospho-D-ribosyl)glycinamide: step 1/2. Part of the phosphoribosylformylglycinamidine synthase complex involved in the purines biosynthetic pathway. Catalyzes the ATP-dependent conversion of formylglycinamide ribonucleotide (FGAR) and glutamine to yield formylglycinamidine ribonucleotide (FGAM) and glutamate. The FGAM synthase complex is composed of three subunits. PurQ produces an ammonia molecule by converting glutamine to glutamate. PurL transfers the ammonia molecule to FGAR to form FGAM in an ATP-dependent manner. PurS interacts with PurQ and PurL and is thought to assist in the transfer of the ammonia molecule from PurQ to PurL. The protein is Phosphoribosylformylglycinamidine synthase subunit PurQ of Latilactobacillus sakei subsp. sakei (strain 23K) (Lactobacillus sakei subsp. sakei).